We begin with the raw amino-acid sequence, 560 residues long: Alpha-keto-acid decarboxylase (560 aa).

E61 is a binding site for thiamine diphosphate. The tract at residues 396–478 is thiamine pyrophosphate binding; that stretch reads TSFYGMADHR…VVVNNDGYTV (83 aa). Mg(2+) is bound by residues D446, N473, and G475.

It belongs to the TPP enzyme family. Requires a metal cation as cofactor. Thiamine diphosphate serves as cofactor.

In terms of biological role, decarboxylates branched-chain and aromatic alpha-keto acids to aldehydes. This chain is Alpha-keto-acid decarboxylase (kdc), found in Mycobacterium bovis (strain ATCC BAA-935 / AF2122/97).